The primary structure comprises 463 residues: GTPase Der (463 aa).

2 EngA-type G domains span residues 3–166 (PVVA…PESG) and 177–350 (IRIA…QSAM). GTP-binding positions include 9 to 16 (GRTNVGKS), 56 to 60 (DTGGI), 118 to 121 (NKID), 183 to 190 (GRPNVGKS), 230 to 234 (DTAGI), and 295 to 298 (NKWD). Residues 351–435 (LDLSASRLTQ…PLKLVFKSAE (85 aa)) enclose the KH-like domain.

This sequence belongs to the TRAFAC class TrmE-Era-EngA-EngB-Septin-like GTPase superfamily. EngA (Der) GTPase family. As to quaternary structure, associates with the 50S ribosomal subunit.

GTPase that plays an essential role in the late steps of ribosome biogenesis. In Methylococcus capsulatus (strain ATCC 33009 / NCIMB 11132 / Bath), this protein is GTPase Der.